Reading from the N-terminus, the 269-residue chain is Troponin I (269 aa).

Positions 1–104 are disordered; the sequence is MADDEKKAAA…AKKGFMTPER (104 aa). An N-acetylalanine modification is found at Ala2. Positions 9-50 are enriched in low complexity; sequence AAPAAAPAAAAKPAAPAAAPAANGKAAPAANGKAAPAAAAAP. The span at 56-91 shows a compositional bias: basic and acidic residues; sequence DPNDPKVKAEEAKKAKQAEIERKRAEVRKRMEEASK. Positions 162–171 are troponin T-interaction; it reads ERMYICEGQK. The interval 189-202 is actin-binding; it reads NAQVNDLRGKFVKP. Lys201 and Lys205 each carry N6,N6,N6-trimethyllysine. The interval 239-269 is disordered; the sequence is TLEEEEKEKKPDWSKGKPGDAKVKEEVEAEA.

The protein belongs to the troponin I family. In terms of assembly, binds to actin and tropomyosin. In terms of tissue distribution, all isoforms are expressed in somatic muscle. Isoforms containing exon 6a1 (isoforms 1 and 2) are expressed in all muscles but highest expression is in abdominal muscle and splanchnic muscle of the gut. Isoforms containing exon 6b1 (isoforms 5, 6, 9 and 10) are highly expressed in the tergal depressor of trochanter (TDT) muscle.

Troponin I is the ATPase inhibitory subunit of troponin in the thin filament regulatory complex. Involved in the development and maintenance of muscle and nervous system. May also be involved in the cytoskeletal apparatus. In Drosophila melanogaster (Fruit fly), this protein is Troponin I (wupA).